Consider the following 844-residue polypeptide: Eukaryotic translation elongation factor 2 (844 aa).

The tr-type G domain maps to 17 to 348 (RNIRNMSVIA…MIAIHLPSPV (332 aa)). A GTP-binding site is contributed by 26–33 (AHVDHGKS). Phosphothreonine is present on residues threonine 57 and threonine 59. Residues 162-165 (NKMD) and 219-221 (SGL) each bind GTP. Residue histidine 701 is modified to Diphthamide.

Belongs to the TRAFAC class translation factor GTPase superfamily. Classic translation factor GTPase family. EF-G/EF-2 subfamily. Phosphorylation by EF-2 kinase completely inactivates eEF2.

It localises to the cytoplasm. The catalysed reaction is GTP + H2O = GDP + phosphate + H(+). Its function is as follows. Catalyzes the GTP-dependent ribosomal translocation step during translation elongation. During this step, the ribosome changes from the pre-translocational (PRE) to the post-translocational (POST) state as the newly formed A-site-bound peptidyl-tRNA and P-site-bound deacylated tRNA move to the P and E sites, respectively. Catalyzes the coordinated movement of the two tRNA molecules, the mRNA and conformational changes in the ribosome. In Drosophila melanogaster (Fruit fly), this protein is Eukaryotic translation elongation factor 2.